The sequence spans 368 residues: F-box only protein 28 (368 aa).

A compositionally biased stretch (basic and acidic residues) spans Met1–Glu11. Residues Met1–Gln57 are disordered. Over residues Glu12–Gly21 the composition is skewed to gly residues. Pro residues predominate over residues Leu32–Ala52. Residues Asn61 to Val109 enclose the F-box domain. Phosphoserine occurs at positions 235 and 242. Thr270 carries the phosphothreonine modification. The interval Met328–Lys368 is disordered. Position 344 is a phosphoserine (Ser344).

Part of a SCF (SKP1-cullin-F-box) protein ligase complex.

Its subcellular location is the chromosome. It localises to the centromere. It is found in the kinetochore. In terms of biological role, probably recognizes and binds to some phosphorylated proteins and promotes their ubiquitination and degradation. The polypeptide is F-box only protein 28 (FBXO28) (Bos taurus (Bovine)).